A 257-amino-acid polypeptide reads, in one-letter code: Reticulon-like protein B4 (257 aa).

Positions 19-42 (IHGHGDSSSLSDSDDDKKSTSSSS) are disordered. Positions 68 to 257 (PADIFLWRNK…PRGALNKKKD (190 aa)) constitute a Reticulon domain. Helical transmembrane passes span 78–98 (KVSGGVLGAVTASWVLFELFE), 99–119 (YHLLAFLCHFAIFALAALFLW), and 173–193 (FILVIAGLWVLSIIGSCYNFL).

In terms of assembly, interacts with VirB2.

It localises to the endoplasmic reticulum membrane. Plays a role in the Agrobacterium-mediated plant transformation via its interaction with VirB2, the major component of the T-pilus. This Arabidopsis thaliana (Mouse-ear cress) protein is Reticulon-like protein B4 (RTNLB4).